Reading from the N-terminus, the 607-residue chain is Tyrosine-protein kinase RYK (607 aa).

Residues Met-1–Gly-20 are disordered. Positions Met-1–Pro-25 are cleaved as a signal peptide. At Pro-26–Arg-227 the chain is on the extracellular side. Residues Leu-66–Cys-194 enclose the WIF domain. N-linked (GlcNAc...) asparagine glycosylation is found at Asn-139, Asn-174, Asn-178, Asn-182, and Asn-209. A disulfide bridge links Cys-159 with Cys-194. The helical transmembrane segment at Val-228–Ala-248 threads the bilayer. At Val-249 to Val-607 the chain is on the cytoplasmic side. Low complexity predominate over residues Ala-266 to Gln-282. Residues Ala-266–Asn-290 form a disordered region. Residues Ile-330–Leu-603 form the Protein kinase domain. ATP contacts are provided by residues Leu-336 to Ile-344 and Lys-364. Asp-465 serves as the catalytic Proton acceptor. The residue at position 495 (Tyr-495) is a Phosphotyrosine; by autocatalysis.

The protein belongs to the protein kinase superfamily. Tyr protein kinase family. Interacts with DVL1 (via PDZ domain). In terms of processing, proteolytically cleaved, in part by presenilin, in response to WNT3 stimulation. Cleavage occurs during neuronal differentiation. In terms of tissue distribution, observed in all the tissues examined.

Its subcellular location is the membrane. The protein localises to the nucleus. The protein resides in the cytoplasm. The enzyme catalyses L-tyrosyl-[protein] + ATP = O-phospho-L-tyrosyl-[protein] + ADP + H(+). In terms of biological role, may be a coreceptor along with FZD8 of Wnt proteins, such as WNT1, WNT3, WNT3A and WNT5A. Involved in neuron differentiation, axon guidance, corpus callosum establishment and neurite outgrowth. In response to WNT3 stimulation, receptor C-terminal cleavage occurs in its transmembrane region and allows the C-terminal intracellular product to translocate from the cytoplasm to the nucleus where it plays a crucial role in neuronal development. This chain is Tyrosine-protein kinase RYK, found in Homo sapiens (Human).